We begin with the raw amino-acid sequence, 637 residues long: tRNA uridine 5-carboxymethylaminomethyl modification enzyme MnmG (637 aa).

Residues 15–20 (GAGHAG), I127, and S182 contribute to the FAD site. 276 to 290 (GPRYCPSIEDKIVRF) is a binding site for NAD(+). Q373 lines the FAD pocket.

Belongs to the MnmG family. Homodimer. Heterotetramer of two MnmE and two MnmG subunits. FAD is required as a cofactor.

The protein resides in the cytoplasm. Its function is as follows. NAD-binding protein involved in the addition of a carboxymethylaminomethyl (cmnm) group at the wobble position (U34) of certain tRNAs, forming tRNA-cmnm(5)s(2)U34. This Streptococcus pneumoniae serotype 4 (strain ATCC BAA-334 / TIGR4) protein is tRNA uridine 5-carboxymethylaminomethyl modification enzyme MnmG.